A 416-amino-acid polypeptide reads, in one-letter code: CinA-like protein (416 aa).

This sequence belongs to the CinA family.

The chain is CinA-like protein from Trichormus variabilis (strain ATCC 29413 / PCC 7937) (Anabaena variabilis).